Here is a 359-residue protein sequence, read N- to C-terminus: 1-deoxy-D-xylulose 5-phosphate reductoisomerase (359 aa).

NADPH contacts are provided by Thr12, Gly13, Ser14, Ile15, Lys38, and Asn39. 1-deoxy-D-xylulose 5-phosphate is bound at residue Lys105. Glu106 contacts NADPH. Residue Asp130 participates in Mn(2+) binding. 1-deoxy-D-xylulose 5-phosphate is bound by residues Ser131, Glu132, Ser152, and His175. Position 132 (Glu132) interacts with Mn(2+). NADPH is bound at residue Gly181. Residues Ser188, Asn193, Lys194, and Glu197 each contribute to the 1-deoxy-D-xylulose 5-phosphate site. Glu197 is a binding site for Mn(2+).

The protein belongs to the DXR family. Mg(2+) is required as a cofactor. Mn(2+) serves as cofactor.

It catalyses the reaction 2-C-methyl-D-erythritol 4-phosphate + NADP(+) = 1-deoxy-D-xylulose 5-phosphate + NADPH + H(+). It participates in isoprenoid biosynthesis; isopentenyl diphosphate biosynthesis via DXP pathway; isopentenyl diphosphate from 1-deoxy-D-xylulose 5-phosphate: step 1/6. Catalyzes the NADPH-dependent rearrangement and reduction of 1-deoxy-D-xylulose-5-phosphate (DXP) to 2-C-methyl-D-erythritol 4-phosphate (MEP). This chain is 1-deoxy-D-xylulose 5-phosphate reductoisomerase, found in Pseudothermotoga lettingae (strain ATCC BAA-301 / DSM 14385 / NBRC 107922 / TMO) (Thermotoga lettingae).